We begin with the raw amino-acid sequence, 394 residues long: Metallophosphoesterase 1 (394 aa).

The helical transmembrane segment at 27–47 threads the bilayer; sequence TVVVISVLLFCEYFIYYLVLF. Residues Asp74, Asp116, Asn154, His247, His301, and His303 each coordinate a divalent metal cation. A helical transmembrane segment spans residues 354–374; the sequence is TVLTTYCAAAAFLLVLILAHF.

It belongs to the metallophosphoesterase superfamily. MPPE1 family. In terms of assembly, interacts with GPI-anchor proteins (via the GPI portion). Interacts with TMED10. The cofactor is Mn(2+).

The protein localises to the endoplasmic reticulum-Golgi intermediate compartment membrane. Its function is as follows. Metallophosphoesterase that catalyzes the removal of a side-chain ethanolamine-phosphate (EtNP) from the second mannose of the GPI-anchor protein intermediate. Participates in the glycan remodeling steps of GPI-anchor maturation to allow an efficient transport of GPI-anchor proteins from the endoplasmic reticulum to the Golgi. The sequence is that of Metallophosphoesterase 1 from Rattus norvegicus (Rat).